The primary structure comprises 242 residues: DNA repair protein RecO (242 aa).

Belongs to the RecO family. As to quaternary structure, monomer.

Functionally, involved in DNA repair and RecF pathway recombination. In Shigella flexneri, this protein is DNA repair protein RecO.